The chain runs to 111 residues: MFKATARYIRVQPRKARLAAGLMRNLSVQEAEEQLGFSQLKAGRCLKKVLNSAVANAELHENIKRENLSVTEVRVDAGPVYKRSKSKSRGGRSPILKRTSHLTVIVGEKER.

It belongs to the universal ribosomal protein uL22 family. As to quaternary structure, part of the 50S ribosomal subunit.

Its function is as follows. This protein binds specifically to 23S rRNA; its binding is stimulated by other ribosomal proteins, e.g. L4, L17, and L20. It is important during the early stages of 50S assembly. It makes multiple contacts with different domains of the 23S rRNA in the assembled 50S subunit and ribosome. The globular domain of the protein is located near the polypeptide exit tunnel on the outside of the subunit, while an extended beta-hairpin is found that lines the wall of the exit tunnel in the center of the 70S ribosome. This chain is Large ribosomal subunit protein uL22, found in Chlamydia pneumoniae (Chlamydophila pneumoniae).